Consider the following 933-residue polypeptide: MPRPRPRALRGSSPGWALVAAVAVGAALLMATLAVAAPPGPRGPAARSPGLEDASVEPVEDGDYDEYDDEGHTPTDVPGSGPESPGPDRPPRGPGGGSGRRRGSPGNGTRSAARRQLRESLRRIQAEYAASAFYVCPPPTGATVVQFEEPRPCPDVAAGKNFTEGIAVVFKENIAPYKFTATKYYKEITVSQTWQGSRYLQLTGLYNDRAPVPFSEITDLINGKGRCRSDVTYTRSQRRVTAYDGDEWGREVALVPAKTSTPNSRGWYTTDRVYAPNAHAGFYKTGTTVNCIVEEMEARSAFPYDSFVLATGEFVYASPFSGFSEDARRERNRYAPDRFRQVDGFYPRDLDSGQRAATPVVRNLLTTPTFTVGWDWKPKRPNVCSVTKWQVVEEMVRAEYGSAFRFTSAALSATFTSNLTQYPPELIEHSDCVAREAAESIEAIYARRYNASHVRVGGVQYYLAAGGFLLAFQPLLSNSLAEMYRREALLGRSGDLAAALAPPPVAAPASGAGPRGTISTTQTVEFARLQFTYDHIQKHVNEMLGRIAAAWCQLQNQELVLWNEARKLNPGAIASATVGTRVGARMLGDVMAVSTCIPVSPDNVIMQNSMRIPGDPKTCYARPLVSFRYTDEGELVEGQLGEDNEIRLEQNNVEPCTVGHKRYFVFGGGYVYFEEYAYSHQVSRADVPVVSTFVDLNLTMLEDHEFLPLEVYTRREIKDSGLLDYAEVQRRNQLHALRFSDIDRIMNDSANAALMAGLARFFDGMGDAGKAIGRAVLGVTEGLISVVSGVSSFLSNPFGALAVGLLVLAGLVAAFFAMRYIMRLRANPMRALYPLTTSGIKAEARAALGSGGDKGGAGDGAAGVEDFDEAKLEAARDMIRYMTLVSAMERTAHKAKKRGTSARISAHLTDMVLAAQGAEYQPLSKDDEDGADP.

The first 36 residues, 1 to 36, serve as a signal peptide directing secretion; sequence MPRPRPRALRGSSPGWALVAAVAVGAALLMATLAVA. Residues 36 to 49 are compositionally biased toward low complexity; the sequence is AAPPGPRGPAARSP. The segment at 36 to 115 is disordered; sequence AAPPGPRGPA…GNGTRSAARR (80 aa). Residues 37–797 are Virion surface-facing; the sequence is APPGPRGPAA…SGVSSFLSNP (761 aa). Acidic residues predominate over residues 54-69; sequence ASVEPVEDGDYDEYDD. Asn-107 and Asn-161 each carry an N-linked (GlcNAc...) asparagine; by host glycan. Intrachain disulfides connect Cys-136–Cys-596, Cys-153–Cys-552, Cys-227–Cys-291, Cys-384–Cys-432, and Cys-619–Cys-656. Involved in fusion and/or binding to host membrane regions lie at residues 193 to 199 and 278 to 285; these read TWQGSRY and AHAGFYKT. N-linked (GlcNAc...) asparagine; by host glycosylation is found at Asn-418 and Asn-450. N-linked (GlcNAc...) asparagine; by host glycosylation is found at Asn-697 and Asn-747. Hydrophobic membrane proximal region stretches follow at residues 742–795 and 754–795; these read IDRI…SFLS and LMAG…SFLS. The chain crosses the membrane as a helical span at residues 798 to 818; sequence FGALAVGLLVLAGLVAAFFAM. Residues 819 to 933 lie on the Intravirion side of the membrane; that stretch reads RYIMRLRANP…SKDDEDGADP (115 aa). The short motif at 881–884 is the Golgi targeting element; it reads YMTL. The Internalization motif motif lies at 920–923; the sequence is YQPL.

Belongs to the herpesviridae glycoprotein B family. As to quaternary structure, homotrimer; disulfide-linked. Binds to heparan sulfate proteoglycans. Interacts with gH/gL heterodimer.

It is found in the virion membrane. The protein resides in the host cell membrane. Its subcellular location is the host endosome membrane. The protein localises to the host Golgi apparatus membrane. Its function is as follows. Envelope glycoprotein that forms spikes at the surface of virion envelope. Essential for the initial attachment to heparan sulfate moieties of the host cell surface proteoglycans. Involved in fusion of viral and cellular membranes leading to virus entry into the host cell. Following initial binding to its host receptors, membrane fusion is mediated by the fusion machinery composed at least of gB and the heterodimer gH/gL. May be involved in the fusion between the virion envelope and the outer nuclear membrane during virion egress. The chain is Envelope glycoprotein B from Herpesvirus ateles type 1 (strain Lennette).